Reading from the N-terminus, the 210-residue chain is Cdc42 effector protein 2 (210 aa).

The residue at position 2 (Ser-2) is an N-acetylserine. Residues 30 to 44 (ISPPLGDFRHTIHIG) enclose the CRIB domain. Phosphoserine occurs at positions 31, 101, and 141. Residues 124–145 (AQAPPKPPRLHLETPQASPQEA) are disordered.

It belongs to the BORG/CEP family. As to quaternary structure, interacts with CDC42 and RHOQ, in a GTP-dependent manner, and with SEPT7.

The protein resides in the endomembrane system. It is found in the cytoplasm. Its subcellular location is the cytoskeleton. Its function is as follows. Probably involved in the organization of the actin cytoskeleton. May act downstream of CDC42 to induce actin filament assembly leading to cell shape changes. Induces pseudopodia formation in fibroblasts in a CDC42-dependent manner. This is Cdc42 effector protein 2 (CDC42EP2) from Bos taurus (Bovine).